The following is a 531-amino-acid chain: Unconventional prefoldin RPB5 interactor (531 aa).

At M1 the chain carries N-acetylmethionine. Disordered stretches follow at residues 1 to 24 (MEPPSEPEPEPQPLAEASAAAPLR), 224 to 381 (ELES…ELPA), 408 to 470 (KSRS…SGVS), and 500 to 531 (TIPERKEVPSEVSEEPTKRVSKFRAARLQQRS). The span at 13–24 (PLAEASAAAPLR) shows a compositional bias: low complexity. Polar residues-rich tracts occupy residues 257–266 (SPVTDSSAAS) and 280–296 (GQVNSLNYSVNGSNSYH). Acidic residues predominate over residues 300 to 319 (DDDEEEEDDDDDDDEDDDNE). A Phosphoserine; by RPS6KB1 modification is found at S369. Polar residues predominate over residues 414–424 (NSVCSDTSESS). A Phosphoserine modification is found at S439.

Belongs to the RNA polymerase II subunit 5-mediating protein family. As to quaternary structure, homodimer. Component of the PAQosome complex which is responsible for the biogenesis of several protein complexes and which consists of R2TP complex members RUVBL1, RUVBL2, RPAP3 and PIH1D1, URI complex members PFDN2, PFDN6, PDRG1, UXT and URI1 as well as ASDURF, POLR2E and DNAAF10/WDR92. Interacts with POLR2E/RPB5, RUVBL2 and RUVBL1. Interacts with PFDN2, PFDN4 and STAP1; the interactions are phosphorylation-dependent and occur in a growth-dependent manner in the mitochondrion. Interacts with UXT. Interacts with PPP1CC; the interaction is phosphorylation-dependent and occurs in a growth factor-dependent manner. Interacts (via the middle C-terminal region) with GTF2F1 and GTF2F2. Interacts with DMAP1. Interacts with TSC1 and TSC2. Interacts with PRPF8 and EFTUD2 in a ZNHIT2-dependent manner. Post-translationally, phosphorylation occurs in response to androgen treatment in prostate cancer cells in a mTOR-dependent manner. Phosphorylated; hyperhosphorylated in mitochondria in a mTORC-dependent signaling pathway. Phosphorylated at Ser-369 by RPS6KB1 in a growth factor- and rapamycin-dependent manner. S6K1-mediated mitochondrial phosphorylation at Ser-369 disrupts the URI1-PPP1CC complex in the mitochondrion, relieves PPP1CC phosphatase inhibition activity and hence engages a negative feedback diminishing RPS6KB1 kinase activity, preventing sustained S6K1-dependent signaling. Phosphorylated. Phosphorylation occurs essentially on serine residues. In terms of tissue distribution, expressed in the spinal cord, ganglia, choroid plexus and olfactors epithelium of the developing brain. Expressed in skin, lung, kidney, testis and muscles (at protein level). Expressed strongly in brain and kidney. Expressed weakly in skeletal muscle, lung and liver.

The protein resides in the nucleus. Its subcellular location is the cytoplasm. It localises to the mitochondrion. It is found in the cell projection. The protein localises to the dendrite. Its function is as follows. Involved in gene transcription regulation. Acts as a transcriptional repressor in concert with the corepressor UXT to regulate androgen receptor (AR) transcription. May act as a tumor suppressor to repress AR-mediated gene transcription and to inhibit anchorage-independent growth in prostate cancer cells. Required for cell survival in ovarian cancer cells. Together with UXT, associates with chromatin to the NKX3-1 promoter region. Plays a central role in maintaining S6K1 signaling and BAD phosphorylation under normal growth conditions thereby protecting cells from potential deleterious effects of sustained S6K1 signaling. The URI1-PPP1CC complex acts as a central component of a negative feedback mechanism that counteracts excessive S6K1 survival signaling to BAD in response to growth factors. Mediates inhibition of PPP1CC phosphatase activity in mitochondria. Coordinates the regulation of nutrient-sensitive gene expression availability in a mTOR-dependent manner. Seems to be a scaffolding protein able to assemble a prefoldin-like complex that contains PFDs and proteins with roles in transcription and ubiquitination. This is Unconventional prefoldin RPB5 interactor (Uri1) from Mus musculus (Mouse).